We begin with the raw amino-acid sequence, 162 residues long: Endoribonuclease YbeY (162 aa).

3 residues coordinate Zn(2+): histidine 128, histidine 132, and histidine 138.

This sequence belongs to the endoribonuclease YbeY family. The cofactor is Zn(2+).

It localises to the cytoplasm. Single strand-specific metallo-endoribonuclease involved in late-stage 70S ribosome quality control and in maturation of the 3' terminus of the 16S rRNA. The chain is Endoribonuclease YbeY from Levilactobacillus brevis (strain ATCC 367 / BCRC 12310 / CIP 105137 / JCM 1170 / LMG 11437 / NCIMB 947 / NCTC 947) (Lactobacillus brevis).